Consider the following 280-residue polypeptide: DegV domain-containing protein Mb2440c (280 aa).

A DegV domain is found at 3-274; sequence VVVVTDTSCR…AGAVGVCVDV (272 aa). Position 89 (serine 89) interacts with hexadecanoate.

Its function is as follows. May bind long-chain fatty acids, such as palmitate, and may play a role in lipid transport or fatty acid metabolism. This chain is DegV domain-containing protein Mb2440c, found in Mycobacterium bovis (strain ATCC BAA-935 / AF2122/97).